Reading from the N-terminus, the 185-residue chain is Ribosome-recycling factor (185 aa).

It belongs to the RRF family.

It localises to the cytoplasm. Its function is as follows. Responsible for the release of ribosomes from messenger RNA at the termination of protein biosynthesis. May increase the efficiency of translation by recycling ribosomes from one round of translation to another. The chain is Ribosome-recycling factor from Xanthomonas euvesicatoria pv. vesicatoria (strain 85-10) (Xanthomonas campestris pv. vesicatoria).